Reading from the N-terminus, the 717-residue chain is Ferric reduction oxidase 3, mitochondrial (717 aa).

Residues 1 to 23 (MAARGRLVVARGNRSFSSIIRKY) constitute a mitochondrion transit peptide. 6 helical membrane passes run 40–59 (LLTMVILMGTVVIWIMMPTS), 86–104 (LLVYMFPMILLASLGSIYL), 140–163 (LGIVTVTEVMFLMMFMALLLWSLA), 232–255 (YHIWLGNLVMTLFTSHGLCYCIYW), 306–330 (THYLYMVFMLFFVFHVGISYALISF), and 353–373 (LVSARVLPCETVELNFSKNPM). The 120-residue stretch at 198–317 (GLTGNICLGF…YLYMVFMLFF (120 aa)) folds into the Ferric oxidoreductase domain. Heme-binding residues include His233, His247, His307, and His320. An FAD-binding FR-type domain is found at 346–451 (QSRNNVKLVS…EGPYGPASTD (106 aa)). Residue 395-398 (HPFT) participates in FAD binding. NAD(+) is bound at residue 443 to 446 (GPYG). 2 helical membrane-spanning segments follow: residues 564–586 (WLWLATILSSSFMIFIIIIAIIS) and 606–627 (SLIYLLAISISVVATSTVAMLC).

This sequence belongs to the ferric reductase (FRE) family. FAD serves as cofactor. Expressed in root steele. Detected in shoots, leaves, stems, siliques, flowers and cotyledons.

Its subcellular location is the mitochondrion membrane. The enzyme catalyses 2 a Fe(II)-siderophore + NAD(+) + H(+) = 2 a Fe(III)-siderophore + NADH. Functionally, ferric chelate reductase involved in iron reduction in roots. May participate in the transport of electrons to a Fe(3+) ion via FAD and heme intermediates. The polypeptide is Ferric reduction oxidase 3, mitochondrial (FRO3) (Arabidopsis thaliana (Mouse-ear cress)).